Consider the following 533-residue polypeptide: Tyrosine ammonia-lyase (533 aa).

Y57 serves as the catalytic Proton donor/acceptor. H87 is a binding site for substrate. A cross-link (5-imidazolinone (Ala-Gly)) is located at residues 146–148 (ASG). Position 147 is a 2,3-didehydroalanine (Ser) (S147). Substrate is bound by residues N200 and R305.

The protein belongs to the TAL/TAM family. In terms of assembly, homotetramer; dimer of dimers. In terms of processing, contains an active site 4-methylidene-imidazol-5-one (MIO), which is formed autocatalytically by cyclization and dehydration of residues Ala-Ser-Gly.

It catalyses the reaction L-tyrosine = (E)-4-coumarate + NH4(+). It carries out the reaction L-tyrosine = 3-amino-3-(4-hydroxyphenyl)propanoate. In terms of biological role, has ammonia-lyase and, to a lesser extent, aminomutase activity. Catalyzes the rearrangement of L-tyrosine to R-beta-tyrosine and S-beta-tyrosine. Does not accept L-histidine or L-phenylalanine as substrates. This is Tyrosine ammonia-lyase from Cupriavidus metallidurans (strain ATCC 43123 / DSM 2839 / NBRC 102507 / CH34) (Ralstonia metallidurans).